Consider the following 190-residue polypeptide: UPF0725 protein At2g20625 (190 aa).

The protein belongs to the UPF0725 (EMB2204) family.

This Arabidopsis thaliana (Mouse-ear cress) protein is UPF0725 protein At2g20625.